Consider the following 357-residue polypeptide: Homoserine kinase (357 aa).

It belongs to the GHMP kinase family. Homoserine kinase subfamily. In terms of assembly, homodimer.

The enzyme catalyses L-homoserine + ATP = O-phospho-L-homoserine + ADP + H(+). It functions in the pathway amino-acid biosynthesis; L-threonine biosynthesis; L-threonine from L-aspartate: step 4/5. Functionally, commits homoserine to the threonine biosynthesis pathway by catalyzing its O-phosphorylation. This Candida albicans (strain SC5314 / ATCC MYA-2876) (Yeast) protein is Homoserine kinase (THR1).